We begin with the raw amino-acid sequence, 512 residues long: Maturase K (512 aa).

This sequence belongs to the intron maturase 2 family. MatK subfamily.

It is found in the plastid. Its subcellular location is the chloroplast. Usually encoded in the trnK tRNA gene intron. Probably assists in splicing its own and other chloroplast group II introns. The protein is Maturase K of Filarum manserichense.